Here is a 408-residue protein sequence, read N- to C-terminus: Protein EcsB (408 aa).

The next 9 membrane-spanning stretches (helical) occupy residues 30–50, 53–73, 111–131, 134–154, 180–200, 284–304, 308–328, 351–371, and 374–394; these read HLVI…SKWI, IPAH…VLTS, LFPL…VTPG, LVSY…NQVM, LVLY…YVIM, YLGI…YVSA, IAAV…LPLF, YFSL…VASA, and AGLT…FVVL.

Its subcellular location is the cell membrane. Its function is as follows. Presumed to form part of an ABC-transporter, it may form a transport channel. In Bacillus subtilis (strain 168), this protein is Protein EcsB (ecsB).